We begin with the raw amino-acid sequence, 155 residues long: Ribosome maturation factor RimP (155 aa).

Belongs to the RimP family.

The protein localises to the cytoplasm. Required for maturation of 30S ribosomal subunits. This chain is Ribosome maturation factor RimP, found in Macrococcus caseolyticus (strain JCSC5402) (Macrococcoides caseolyticum).